The following is an 867-amino-acid chain: MVNKKYTSGQNENEKLMDRIEKLDLSESNILNNDFITNELRKVYPEYNRKPLKGFKQLVEKAMNQIIKNLSSCESSENEDGDNKMEESDGDDVEIISPPLPPPSSNILNEQLTSQYKQNIKNTPPTTTTTTPAKRNRDENIPSNVNSNNNNNNNNNAINSNTTTNNVNTPNSKPKKKLKNSSNGNNVFQFSNNNNNNGNNKDNNLSNGLIPTINFSNLGGVESCLRDIREHIEYPICHPEIYSHLGVEPPRGILLHGPSGCGKTLLAKAIAGELKVPLFAISATEITSGVSGESEARVRTLFSNAIAQAPCIIFIDEIDAIAPKRESASKDMERRIVSQLLTCMDSLNYLSSNNSTNEPNEQTEQQQQQQQDIIEVDSQATTTTTASNNNNKQQKNDFKKGHVIVIGATNRPESLDTALRIGGRFDKEICLGIPDQTARCKILKVITSKMRLENNFDYEEIATLTPGYVGADINLLVKEAATNSVNRIFTSNLNGASSSSSSSSSSTTNINNIGLSTELLISKEPLEPEKLNSLYIEMIDFKKALKKVVPAAKREGFATIPNVTWDDVGALSGVREELTNSILRPIRYPKKYKNMGIDSPAGVLMYGPPGCGKTLLAKAIASECQANFISVKGPELLNKYVGESERAVRQVFQRAAASSPCVIFFDEFDALAPKRGGGDGGGNQATERVVNQLLTEMDGLEKRSEVFIIAATNRPDIIDAAMCRPGRLDKMVYVPLPSPEERCEILKTLTHKIPIHQDVDLIKVGTDLRCHSFSGADLSLLVKEAANHAISRGFDNNSTEPDTVTMEDFIFALSKIKPSVSRKDELMYDKLNNDINKSRDKKPNNSNNIPITNNIPITNNNNNMIIN.

Residues 70–203 (LSSCESSENE…NNNNGNNKDN (134 aa)) are disordered. A compositionally biased stretch (polar residues) spans 110-122 (EQLTSQYKQNIKN). Low complexity-rich tracts occupy residues 123–132 (TPPTTTTTTP), 141–172 (IPSN…TPNS), and 180–203 (NSSN…NKDN). 257-264 (GPSGCGKT) contacts ATP. Residues 351-370 (SSNNSTNEPNEQTEQQQQQQ) are disordered. 607–614 (GPPGCGKT) lines the ATP pocket. Residues 834–843 (DINKSRDKKP) are compositionally biased toward basic and acidic residues. The tract at residues 834 to 855 (DINKSRDKKPNNSNNIPITNNI) is disordered. Residues 844-855 (NNSNNIPITNNI) are compositionally biased toward low complexity.

It belongs to the AAA ATPase family.

It localises to the nucleus. Its subcellular location is the nucleolus. It is found in the nucleoplasm. Functionally, involved in ribosome biogenesis. In Dictyostelium discoideum (Social amoeba), this protein is Putative ribosome biogenesis ATPase nvl (nvl).